Consider the following 105-residue polypeptide: Ig lambda chain C region (105 aa).

Residues 6-100 (PSVILFPPSS…EGHTVEKSLA (95 aa)) enclose the Ig-like domain. Cys27 and Cys86 are joined by a disulfide.

The sequence is that of Ig lambda chain C region from Oryctolagus cuniculus (Rabbit).